The following is a 419-amino-acid chain: Hyaluronan synthase (419 aa).

Transmembrane regions (helical) follow at residues 8-28 (LIVL…MYLF), 33-53 (VGIY…LSFL), 318-338 (IVAL…VAIG), 345-365 (AIQL…IVAL), and 376-396 (PASF…LQPL).

This sequence belongs to the NodC/HAS family. Requires Mg(2+) as cofactor.

The protein localises to the cell membrane. The enzyme catalyses [hyaluronan](n) + UDP-N-acetyl-alpha-D-glucosamine = N-acetyl-beta-D-glucosaminyl-(1-&gt;4)-[hyaluronan](n) + UDP + H(+). It catalyses the reaction N-acetyl-beta-D-glucosaminyl-(1-&gt;4)-[hyaluronan](n) + UDP-alpha-D-glucuronate = [hyaluronan](n+1) + UDP + H(+). The protein operates within glycan biosynthesis; hyaluronan biosynthesis. Its function is as follows. Glycosaminoglycan synthesis. The hyaluronic acid capsule is involved in the pathogenicity of group A Streptococci; it may be the major virulence determinant. In Streptococcus pyogenes serotype M18 (strain MGAS8232), this protein is Hyaluronan synthase (hasA).